Here is a 209-residue protein sequence, read N- to C-terminus: Pyroglutamyl-peptidase 1 (209 aa).

Catalysis depends on residues glutamate 85, cysteine 149, and histidine 168.

The protein belongs to the peptidase C15 family. In terms of assembly, monomer.

The protein localises to the cytoplasm. The enzyme catalyses Release of an N-terminal pyroglutamyl group from a polypeptide, the second amino acid generally not being Pro.. Removes 5-oxoproline from various penultimate amino acid residues except L-proline. The sequence is that of Pyroglutamyl-peptidase 1 (Pgpep1) from Mus musculus (Mouse).